We begin with the raw amino-acid sequence, 655 residues long: Hepatocyte growth factor activator serine protease (655 aa).

Residues 1-35 form the signal peptide; that stretch reads MGRWAWVPSPWPPPGLGPFLLLLLLLLLLPRGFQP. Residues 36–372 constitute a propeptide, removed in mature form; it reads QPGGNRTESP…RLEACESLTR (337 aa). 2 N-linked (GlcNAc...) asparagine glycosylation sites follow: asparagine 40 and asparagine 48. The disordered stretch occupies residues 64–102; it reads TSETPATSAPEAEGPQSGGLPPPPRAVPSSSSPQAQALT. One can recognise a Fibronectin type-II domain in the interval 103-150; sequence EDGRPCRFPFRYGGRMLHACTSEGSAHRKWCATTHNYDRDRAWGYCVE. 19 disulfide bridges follow: cysteine 108-cysteine 133, cysteine 122-cysteine 148, cysteine 164-cysteine 175, cysteine 169-cysteine 186, cysteine 188-cysteine 197, cysteine 202-cysteine 230, cysteine 228-cysteine 237, cysteine 245-cysteine 256, cysteine 250-cysteine 267, cysteine 269-cysteine 278, cysteine 286-cysteine 367, cysteine 307-cysteine 349, cysteine 338-cysteine 362, cysteine 394-cysteine 521, cysteine 432-cysteine 448, cysteine 440-cysteine 510, cysteine 535-cysteine 604, cysteine 567-cysteine 583, and cysteine 594-cysteine 622. The 39-residue stretch at 160–198 folds into the EGF-like 1 domain; that stretch reads ALDPCASGPCLNGGSCSNTQDPQSYHCSCPRAFTGKDCG. The region spanning 200–240 is the Fibronectin type-I domain; the sequence is EKCFDETRYEYLEGGDRWARVRQGHVEQCECFGGRTWCEGT. In terms of domain architecture, EGF-like 2 spans 241–279; that stretch reads RHTACLSSPCLNGGTCHLIVATGTTVCACPPGFAGRLCN. Positions 286–367 constitute a Kringle domain; sequence CFLGNGTGYR…SWEYCRLEAC (82 aa). N-linked (GlcNAc...) asparagine glycosylation is present at asparagine 290. The region spanning 408 to 646 is the Peptidase S1 domain; the sequence is IIGGSSSLPG…YVDWINDRIR (239 aa). Histidine 447 serves as the catalytic Charge relay system. N-linked (GlcNAc...) asparagine glycosylation is found at asparagine 468 and asparagine 492. Aspartate 497 acts as the Charge relay system in catalysis. A glycan (N-linked (GlcNAc...) asparagine) is linked at asparagine 546. Catalysis depends on serine 598, which acts as the Charge relay system.

Belongs to the peptidase S1 family. As to quaternary structure, heterodimer of a short chain and a long chain linked by a disulfide bond. In terms of processing, the active form of HGFAC presents in the serum is derived from the COOH-terminal region of the precursor by the cleavage of bonds between Arg-372 and Val-373 and Arg-407 and Ile-408. As to expression, liver.

The protein localises to the secreted. Functionally, serine protease that hydrolyzes the inactive zymogen hepatocyte growth factor (HGFsc) to an activated disulfide-linked heterodimer, then initiating hepatocyte growth factor receptor signaling pathway. This chain is Hepatocyte growth factor activator serine protease, found in Homo sapiens (Human).